We begin with the raw amino-acid sequence, 38 residues long: Large ribosomal subunit protein bL36 (38 aa).

This sequence belongs to the bacterial ribosomal protein bL36 family.

This chain is Large ribosomal subunit protein bL36, found in Pseudomonas entomophila (strain L48).